We begin with the raw amino-acid sequence, 209 residues long: Small ribosomal subunit protein uS4 (209 aa).

A disordered region spans residues 23 to 46 (SRNPLLKKPHPPGQHGMQRKKKSD). The S4 RNA-binding domain occupies 93–156 (CRLDNMVYRM…RKLQSVQESL (64 aa)).

The protein belongs to the universal ribosomal protein uS4 family. Part of the 30S ribosomal subunit. Contacts protein S5. The interaction surface between S4 and S5 is involved in control of translational fidelity.

Functionally, one of the primary rRNA binding proteins, it binds directly to 16S rRNA where it nucleates assembly of the body of the 30S subunit. In terms of biological role, with S5 and S12 plays an important role in translational accuracy. This Chlamydia felis (strain Fe/C-56) (Chlamydophila felis) protein is Small ribosomal subunit protein uS4.